Reading from the N-terminus, the 135-residue chain is L-alanine exporter AlaE (135 aa).

Helical transmembrane passes span 9-29, 75-95, and 96-116; these read VATV…IAGM, DILA…LIAG, and ASFA…ILLA.

Belongs to the AlaE exporter family.

The protein resides in the cell inner membrane. Functionally, exports L-alanine. The polypeptide is L-alanine exporter AlaE (Cereibacter sphaeroides (strain ATCC 17023 / DSM 158 / JCM 6121 / CCUG 31486 / LMG 2827 / NBRC 12203 / NCIMB 8253 / ATH 2.4.1.) (Rhodobacter sphaeroides)).